The following is a 423-amino-acid chain: MEELTRSLVNDVEVLNNHFVSTGHPLPSFDRHTPTVVLPNDASPDAHAARERILDNALRLFQLAAGPSAYLLNLQTGYQYASCVRWLCHFQIFHLVPLEGSIAYADLAVLAKAPEPQLISVVRMAMTNGLFLESPPQHLAHSATSALLRNDADFHDWAVTMSDLSFPTAFAMVEAHERWPNSVEGNQTAYNIAVGSELPFFSHLAEQSDRKRQFAGFMRSMARSQGTDVEKLAEGWDWAALGQACVVDVGGSTGHTSVALARKYPDLNFVVEDLPEVVAEGPGYLSYLDDAQDLKSRIGYRAHSFFDPQPVQDADVYMLRMILHNWSFDDCVRILSRLVQTLKPGARIIIVDIVLPDPGVVSASKERLLRVQDLIMQQVFNSMERYLENWMDIFRKVDERLEVKRIVEPPGSLMSLIELSMAA.

D273 lines the S-adenosyl-L-methionine pocket. H324 (proton acceptor) is an active-site residue.

This sequence belongs to the class I-like SAM-binding methyltransferase superfamily. Cation-independent O-methyltransferase family.

Its pathway is secondary metabolite biosynthesis. In terms of biological role, O-methyltransferase; part of the gene cluster that mediates the biosynthesis of a methylated derivative of known natural products orthosporin and diaporthin. Within the pathway, aoiF catalyzes the biotransformation of orthosporin to diaporthin but also of diaporthin to the final product, by performing a tandem methylation of the polyketide core. Orthosporin is produced by an oxidoreductase that has still to be identified and that catalyzes the stereospecific reduction of the carbonyl moiety of the hexaketide isocoumarin scaffold produced by the non-reducing polyketide synthase aoiG to generate the S-configured secondary alcohol at C-11. The protein is O-methyltransferase aoiF of Aspergillus oryzae (strain ATCC 42149 / RIB 40) (Yellow koji mold).